We begin with the raw amino-acid sequence, 137 residues long: Small ribosomal subunit protein uS19 (137 aa).

The protein belongs to the universal ribosomal protein uS19 family.

In terms of biological role, protein S19 forms a complex with S13 that binds strongly to the 16S ribosomal RNA. This chain is Small ribosomal subunit protein uS19, found in Methanospirillum hungatei JF-1 (strain ATCC 27890 / DSM 864 / NBRC 100397 / JF-1).